The sequence spans 278 residues: Dermonecrotic toxin LspiSicTox-betaIE2ii (278 aa).

Residue His5 is part of the active site. Residues Glu25 and Asp27 each coordinate Mg(2+). The active-site Nucleophile is His41. Disulfide bonds link Cys45-Cys51 and Cys47-Cys190. Position 85 (Asp85) interacts with Mg(2+).

It belongs to the arthropod phospholipase D family. Class II subfamily. Requires Mg(2+) as cofactor. Expressed by the venom gland.

The protein localises to the secreted. The catalysed reaction is an N-(acyl)-sphingosylphosphocholine = an N-(acyl)-sphingosyl-1,3-cyclic phosphate + choline. It catalyses the reaction an N-(acyl)-sphingosylphosphoethanolamine = an N-(acyl)-sphingosyl-1,3-cyclic phosphate + ethanolamine. The enzyme catalyses a 1-acyl-sn-glycero-3-phosphocholine = a 1-acyl-sn-glycero-2,3-cyclic phosphate + choline. It carries out the reaction a 1-acyl-sn-glycero-3-phosphoethanolamine = a 1-acyl-sn-glycero-2,3-cyclic phosphate + ethanolamine. In terms of biological role, dermonecrotic toxins cleave the phosphodiester linkage between the phosphate and headgroup of certain phospholipids (sphingolipid and lysolipid substrates), forming an alcohol (often choline) and a cyclic phosphate. This toxin acts on sphingomyelin (SM). It may also act on ceramide phosphoethanolamine (CPE), lysophosphatidylcholine (LPC) and lysophosphatidylethanolamine (LPE), but not on lysophosphatidylserine (LPS), and lysophosphatidylglycerol (LPG). It acts by transphosphatidylation, releasing exclusively cyclic phosphate products as second products. Induces dermonecrosis, hemolysis, increased vascular permeability, edema, inflammatory response, and platelet aggregation. This chain is Dermonecrotic toxin LspiSicTox-betaIE2ii, found in Loxosceles spinulosa (Recluse spider).